Here is a 476-residue protein sequence, read N- to C-terminus: Lactate utilization protein B (476 aa).

4Fe-4S ferredoxin-type domains are found at residues 304 to 334 (GTEF…GHSY) and 353 to 382 (YDEY…LHEL). [4Fe-4S] cluster is bound by residues C313, C316, C319, C323, C366, C369, and C373.

It belongs to the LutB/YkgF family.

Functionally, is involved in L-lactate degradation and allows cells to grow with lactate as the sole carbon source. Has probably a role as an electron transporter during oxidation of L-lactate. The protein is Lactate utilization protein B of Bacillus velezensis (strain DSM 23117 / BGSC 10A6 / LMG 26770 / FZB42) (Bacillus amyloliquefaciens subsp. plantarum).